A 342-amino-acid polypeptide reads, in one-letter code: Putative aryl-alcohol dehydrogenase AAD16 (342 aa).

It belongs to the aldo/keto reductase family. Aldo/keto reductase 2 subfamily.

Putative aryl-alcohol dehydrogenase. In Saccharomyces cerevisiae (strain ATCC 204508 / S288c) (Baker's yeast), this protein is Putative aryl-alcohol dehydrogenase AAD16.